Consider the following 180-residue polypeptide: MTVKEIIIGFLLQIRSILMVFKNIFSKSETKMYPEEKLYLSPRYRGRVILTRNIDGGERCVACNLCAVVCPVDCISLQKSEKKNGRWYPKFFRINFSRCIFCGLCEEACPTAAIQLMPDFELSDFNRQNLVYEKEDLLISGPGKYPDYDFYRFSGVVIKDKKVDKLEGQLKPVNVKDLLP.

2 4Fe-4S ferredoxin-type domains span residues 50 to 80 (LTRN…LQKS) and 90 to 119 (KFFR…LMPD). Cys-60, Cys-63, Cys-66, Cys-70, Cys-99, Cys-102, Cys-105, and Cys-109 together coordinate [4Fe-4S] cluster.

The protein belongs to the complex I 23 kDa subunit family. As to quaternary structure, NDH-1 is composed of 13 different subunits. Subunits NuoA, H, J, K, L, M, N constitute the membrane sector of the complex. The cofactor is [4Fe-4S] cluster.

The protein localises to the cell membrane. It catalyses the reaction a quinone + NADH + 5 H(+)(in) = a quinol + NAD(+) + 4 H(+)(out). NDH-1 shuttles electrons from NADH, via FMN and iron-sulfur (Fe-S) centers, to quinones in the respiratory chain. The immediate electron acceptor for the enzyme in this species is believed to be ubiquinone. Couples the redox reaction to proton translocation (for every two electrons transferred, four hydrogen ions are translocated across the cytoplasmic membrane), and thus conserves the redox energy in a proton gradient. The protein is NADH-quinone oxidoreductase subunit I of Buchnera aphidicola subsp. Schizaphis graminum (strain Sg).